We begin with the raw amino-acid sequence, 537 residues long: Chaperonin GroEL (537 aa).

ATP is bound by residues 29-32, 86-90, glycine 413, and aspartate 492; these read TLGP and DGTTT.

Belongs to the chaperonin (HSP60) family. Forms a cylinder of 14 subunits composed of two heptameric rings stacked back-to-back. Interacts with the co-chaperonin GroES.

It is found in the cytoplasm. The enzyme catalyses ATP + H2O + a folded polypeptide = ADP + phosphate + an unfolded polypeptide.. In terms of biological role, together with its co-chaperonin GroES, plays an essential role in assisting protein folding. The GroEL-GroES system forms a nano-cage that allows encapsulation of the non-native substrate proteins and provides a physical environment optimized to promote and accelerate protein folding. The protein is Chaperonin GroEL of Dehalococcoides mccartyi (strain CBDB1).